A 402-amino-acid chain; its full sequence is 2-pyrone synthase (402 aa).

Acetoacetyl-CoA-binding residues include K60, R63, C169, L272, R274, G310, R312, and A313. Residue C169 is part of the active site.

This sequence belongs to the thiolase-like superfamily. Chalcone/stilbene synthases family. As to expression, expressed in both vegetative and reproductive organs. The expression is strong in the leaf, scape (the inflorescence stem) and corolla (both in the ligule and the unpigmented tube), moderate in the bract and carpel, detectable in the root and pappus but not detectable in the stamen.

The enzyme catalyses 2 malonyl-CoA + acetyl-CoA + 2 H(+) = triacetate lactone + 2 CO2 + 3 CoA. Functionally, polyketide synthase, which uses acetyl-CoA and two condensation reactions with malonyl-CoA to form triacetic acid lactone (also called methylpyrone), a precursor of phytoalexin. May participate in insect and pathogen resistance. This Gerbera hybrida (Daisy) protein is 2-pyrone synthase.